Consider the following 28-residue polypeptide: uORF1 protein (28 aa).

The protein localises to the host cytoplasm. It localises to the host cytoskeleton. In terms of biological role, plays a role in the reorganization of host microtubules and intermediate filaments to form a cytoskeletal cage that surrounds the viral factories, protecting the site of viral replication. May play a role in viral infection of human cortical neurons. The protein is uORF1 protein of Zika virus (isolate ZIKV/Human/French Polynesia/10087PF/2013) (ZIKV).